Reading from the N-terminus, the 290-residue chain is Bifunctional protein FolD (290 aa).

Residues 174–176 (GHS), Ile-199, and Ile-240 each bind NADP(+).

Belongs to the tetrahydrofolate dehydrogenase/cyclohydrolase family. As to quaternary structure, homodimer.

The catalysed reaction is (6R)-5,10-methylene-5,6,7,8-tetrahydrofolate + NADP(+) = (6R)-5,10-methenyltetrahydrofolate + NADPH. The enzyme catalyses (6R)-5,10-methenyltetrahydrofolate + H2O = (6R)-10-formyltetrahydrofolate + H(+). It participates in one-carbon metabolism; tetrahydrofolate interconversion. Its function is as follows. Catalyzes the oxidation of 5,10-methylenetetrahydrofolate to 5,10-methenyltetrahydrofolate and then the hydrolysis of 5,10-methenyltetrahydrofolate to 10-formyltetrahydrofolate. The sequence is that of Bifunctional protein FolD from Methanosarcina acetivorans (strain ATCC 35395 / DSM 2834 / JCM 12185 / C2A).